The following is a 323-amino-acid chain: tRNA U34 carboxymethyltransferase (323 aa).

Residues K91, W105, K110, G130, 152-154 (DPT), 181-182 (IE), M196, Y200, and R315 contribute to the carboxy-S-adenosyl-L-methionine site.

This sequence belongs to the class I-like SAM-binding methyltransferase superfamily. CmoB family. As to quaternary structure, homotetramer.

It carries out the reaction carboxy-S-adenosyl-L-methionine + 5-hydroxyuridine(34) in tRNA = 5-carboxymethoxyuridine(34) in tRNA + S-adenosyl-L-homocysteine + H(+). In terms of biological role, catalyzes carboxymethyl transfer from carboxy-S-adenosyl-L-methionine (Cx-SAM) to 5-hydroxyuridine (ho5U) to form 5-carboxymethoxyuridine (cmo5U) at position 34 in tRNAs. This Cronobacter sakazakii (strain ATCC BAA-894) (Enterobacter sakazakii) protein is tRNA U34 carboxymethyltransferase.